A 62-amino-acid chain; its full sequence is Large ribosomal subunit protein uL30 (62 aa).

Belongs to the universal ribosomal protein uL30 family. In terms of assembly, part of the 50S ribosomal subunit.

The chain is Large ribosomal subunit protein uL30 from Beutenbergia cavernae (strain ATCC BAA-8 / DSM 12333 / CCUG 43141 / JCM 11478 / NBRC 16432 / NCIMB 13614 / HKI 0122).